The chain runs to 212 residues: Large ribosomal subunit protein uL3 (212 aa).

Residues 135 to 155 (ATHGNSVSHRAHGSTGQNQSP) are compositionally biased toward polar residues. Residues 135–162 (ATHGNSVSHRAHGSTGQNQSPGKVFKGK) are disordered. Gln-153 carries the N5-methylglutamine modification.

The protein belongs to the universal ribosomal protein uL3 family. As to quaternary structure, part of the 50S ribosomal subunit. Forms a cluster with proteins L14 and L19. In terms of processing, methylated by PrmB.

Functionally, one of the primary rRNA binding proteins, it binds directly near the 3'-end of the 23S rRNA, where it nucleates assembly of the 50S subunit. In Psychrobacter arcticus (strain DSM 17307 / VKM B-2377 / 273-4), this protein is Large ribosomal subunit protein uL3.